Consider the following 427-residue polypeptide: L-threonine dehydratase biosynthetic IlvA (427 aa).

Lysine 63 is subject to N6-(pyridoxal phosphate)lysine. Pyridoxal 5'-phosphate-binding positions include asparagine 90, 193–197, and serine 319; that span reads GGGGC. One can recognise an ACT-like domain in the interval 343-417; the sequence is HYFLVDFPQK…TEMHVETLQP (75 aa).

It belongs to the serine/threonine dehydratase family. Homotetramer. Pyridoxal 5'-phosphate serves as cofactor.

The catalysed reaction is L-threonine = 2-oxobutanoate + NH4(+). It participates in amino-acid biosynthesis; L-isoleucine biosynthesis; 2-oxobutanoate from L-threonine: step 1/1. Functionally, catalyzes the anaerobic formation of alpha-ketobutyrate and ammonia from threonine in a two-step reaction. The first step involved a dehydration of threonine and a production of enamine intermediates (aminocrotonate), which tautomerizes to its imine form (iminobutyrate). Both intermediates are unstable and short-lived. The second step is the nonenzymatic hydrolysis of the enamine/imine intermediates to form 2-ketobutyrate and free ammonia. In the low water environment of the cell, the second step is accelerated by RidA. The protein is L-threonine dehydratase biosynthetic IlvA (ilvA) of Mycobacterium leprae (strain TN).